The chain runs to 398 residues: Phosphoglycerate kinase (398 aa).

Substrate-binding positions include 21–23 (DFN), Arg36, 59–62 (HLGR), Arg119, and Arg157. ATP is bound by residues Lys208, Gly296, Glu327, and 354 to 357 (GGDS).

It belongs to the phosphoglycerate kinase family. In terms of assembly, monomer.

The protein localises to the cytoplasm. The enzyme catalyses (2R)-3-phosphoglycerate + ATP = (2R)-3-phospho-glyceroyl phosphate + ADP. It functions in the pathway carbohydrate degradation; glycolysis; pyruvate from D-glyceraldehyde 3-phosphate: step 2/5. This chain is Phosphoglycerate kinase, found in Lactococcus lactis subsp. cremoris (strain SK11).